A 122-amino-acid chain; its full sequence is Small ribosomal subunit protein uS13 (122 aa).

Residues 97–122 (PCRGQRTKTNARTRKGPARTVAGKKK) form a disordered region.

It belongs to the universal ribosomal protein uS13 family. As to quaternary structure, part of the 30S ribosomal subunit. Forms a loose heterodimer with protein S19. Forms two bridges to the 50S subunit in the 70S ribosome.

Its function is as follows. Located at the top of the head of the 30S subunit, it contacts several helices of the 16S rRNA. In the 70S ribosome it contacts the 23S rRNA (bridge B1a) and protein L5 of the 50S subunit (bridge B1b), connecting the 2 subunits; these bridges are implicated in subunit movement. Contacts the tRNAs in the A and P-sites. This chain is Small ribosomal subunit protein uS13, found in Geobacter sp. (strain M21).